A 286-amino-acid polypeptide reads, in one-letter code: 33 kDa chaperonin (286 aa).

Intrachain disulfides connect C225-C227 and C258-C261.

It belongs to the HSP33 family. Under oxidizing conditions two disulfide bonds are formed involving the reactive cysteines. Under reducing conditions zinc is bound to the reactive cysteines and the protein is inactive.

Its subcellular location is the cytoplasm. In terms of biological role, redox regulated molecular chaperone. Protects both thermally unfolding and oxidatively damaged proteins from irreversible aggregation. Plays an important role in the bacterial defense system toward oxidative stress. In Shewanella woodyi (strain ATCC 51908 / MS32), this protein is 33 kDa chaperonin.